Here is a 180-residue protein sequence, read N- to C-terminus: Threonylcarbamoyl-AMP synthase (180 aa).

Residues 1-180 form the YrdC-like domain; that stretch reads MRARALQHFL…DLITGAIVRP (180 aa).

Belongs to the SUA5 family. TsaC subfamily.

It localises to the cytoplasm. The enzyme catalyses L-threonine + hydrogencarbonate + ATP = L-threonylcarbamoyladenylate + diphosphate + H2O. Functionally, required for the formation of a threonylcarbamoyl group on adenosine at position 37 (t(6)A37) in tRNAs that read codons beginning with adenine. Catalyzes the conversion of L-threonine, HCO(3)(-)/CO(2) and ATP to give threonylcarbamoyl-AMP (TC-AMP) as the acyladenylate intermediate, with the release of diphosphate. The polypeptide is Threonylcarbamoyl-AMP synthase (Methylobacillus flagellatus (strain ATCC 51484 / DSM 6875 / VKM B-1610 / KT)).